The chain runs to 296 residues: Polyamine aminopropyltransferase (296 aa).

The 234-residue stretch at Glu-5–Gln-238 folds into the PABS domain. Gln-33 contacts S-methyl-5'-thioadenosine. His-64 and Asp-88 together coordinate spermidine. S-methyl-5'-thioadenosine is bound by residues Glu-108 and Asp-140–Gly-141. The active-site Proton acceptor is the Asp-158. Asp-158–Asp-161 lines the spermidine pocket. Pro-165 serves as a coordination point for S-methyl-5'-thioadenosine.

This sequence belongs to the spermidine/spermine synthase family. In terms of assembly, homodimer or homotetramer.

It is found in the cytoplasm. The enzyme catalyses S-adenosyl 3-(methylsulfanyl)propylamine + putrescine = S-methyl-5'-thioadenosine + spermidine + H(+). It participates in amine and polyamine biosynthesis; spermidine biosynthesis; spermidine from putrescine: step 1/1. Its function is as follows. Catalyzes the irreversible transfer of a propylamine group from the amino donor S-adenosylmethioninamine (decarboxy-AdoMet) to putrescine (1,4-diaminobutane) to yield spermidine. The protein is Polyamine aminopropyltransferase of Yersinia pseudotuberculosis serotype O:3 (strain YPIII).